Consider the following 540-residue polypeptide: Cytochrome bc1 complex cytochrome b subunit (540 aa).

Residues 40-60 (EIALYSFIILLLTGVYLTLFF) traverse the membrane as a helical segment. Residues histidine 105 and histidine 119 each coordinate heme. A run of 3 helical transmembrane segments spans residues 109-129 (ALTF…TGAF), 137-157 (WIIG…GYSL), and 169-189 (IMSA…WLIF). Positions 206 and 221 each coordinate heme. A run of 5 helical transmembrane segments spans residues 207 to 227 (VLII…LVWY), 259 to 279 (FGLV…INAI), 325 to 345 (AFWV…YPFI), 371 to 391 (LGVM…NDLF), and 408 to 428 (IGLI…CLGL).

It belongs to the cytochrome b family. As to quaternary structure, the cytochrome bc1 complex is composed of a cytochrome b (QcrB), the Rieske protein iron-sulfur (QcrA) and a diheme cytochrome c (QcrC) subunit. Heme is required as a cofactor.

It is found in the cell membrane. It carries out the reaction a quinol + 2 Fe(III)-[cytochrome c](out) = a quinone + 2 Fe(II)-[cytochrome c](out) + 2 H(+)(out). In terms of biological role, cytochrome b subunit of the cytochrome bc1 complex, an essential component of the respiratory electron transport chain required for ATP synthesis. The bc1 complex catalyzes the oxidation of menaquinol and the reduction of cytochrome c in the respiratory chain. The bc1 complex operates through a Q-cycle mechanism that couples electron transfer to generation of the proton gradient that drives ATP synthesis. The sequence is that of Cytochrome bc1 complex cytochrome b subunit (qcrB) from Corynebacterium diphtheriae (strain ATCC 700971 / NCTC 13129 / Biotype gravis).